Reading from the N-terminus, the 127-residue chain is Fluoride-specific ion channel FluC 1 (127 aa).

4 helical membrane passes run 4–24 (TLLAVFIGGGVGSMARWLVSL), 35–55 (VGTLIVNLVGAFIIGLTLAFF), 71–91 (TGFCGGLTTFSTFSVEVVYLI), and 101–121 (GTILLNVAGSLAMTMLAFILV). Gly-75 and Thr-78 together coordinate Na(+).

Belongs to the fluoride channel Fluc/FEX (TC 1.A.43) family.

It localises to the cell inner membrane. The enzyme catalyses fluoride(in) = fluoride(out). With respect to regulation, na(+) is not transported, but it plays an essential structural role and its presence is essential for fluoride channel function. Fluoride-specific ion channel. Important for reducing fluoride concentration in the cell, thus reducing its toxicity. The chain is Fluoride-specific ion channel FluC 1 from Yersinia pestis.